The chain runs to 483 residues: Regulatory protein ViaA (483 aa).

Belongs to the ViaA family. Homodimer. Interacts with RavA.

Its subcellular location is the cytoplasm. Component of the RavA-ViaA chaperone complex, which may act on the membrane to optimize the function of some of the respiratory chains. ViaA stimulates the ATPase activity of RavA. This Salmonella dublin (strain CT_02021853) protein is Regulatory protein ViaA.